Reading from the N-terminus, the 228-residue chain is uncharacterized protein (228 aa).

S-adenosyl-L-methionine is bound by residues 77 to 79 (TTA), glycine 113, valine 133, and 140 to 142 (PSL).

Belongs to the class IV-like SAM-binding methyltransferase superfamily. RNA methyltransferase TrmH family.

This is an uncharacterized protein from Escherichia coli (strain K12).